The sequence spans 118 residues: Large ribosomal subunit protein uL18 (118 aa).

Positions 1-26 are disordered; it reads MISKPDKNKIRQKRHRRVRGKLSGTA. A compositionally biased stretch (basic residues) spans 10-20; that stretch reads IRQKRHRRVRG.

This sequence belongs to the universal ribosomal protein uL18 family. As to quaternary structure, part of the 50S ribosomal subunit; part of the 5S rRNA/L5/L18/L25 subcomplex. Contacts the 5S and 23S rRNAs.

In terms of biological role, this is one of the proteins that bind and probably mediate the attachment of the 5S RNA into the large ribosomal subunit, where it forms part of the central protuberance. This is Large ribosomal subunit protein uL18 from Streptococcus equi subsp. zooepidemicus (strain H70).